A 155-amino-acid polypeptide reads, in one-letter code: Desiccation-related protein clone PCC6-19 (155 aa).

A disordered region spans residues 1–155 (MAQFGGEKYG…IKEKLPGGQH (155 aa)). Composition is skewed to gly residues over residues 27–39 (AHRGGGIMGGGQQ) and 47–76 (GVLGHGTAGQHGTTGGGLGHGTAGTGGALG). The segment covering 83-92 (GSSSSSSSSE) has biased composition (low complexity). Residues 118-135 (TTTDQQQYGTAATHGQAQ) show a composition bias toward polar residues. A compositionally biased stretch (basic and acidic residues) spans 136–155 (QHEKKGIMDKIKEKLPGGQH).

Belongs to the plant dehydrin family.

The protein is Desiccation-related protein clone PCC6-19 of Craterostigma plantagineum (Blue gem).